The following is a 283-amino-acid chain: S-methyl-5'-thioadenosine phosphorylase (283 aa).

Residue Thr18 participates in phosphate binding. Lys51 bears the N6-acetyllysine mark. Residues 60 to 61 (RH) and 93 to 94 (TA) contribute to the phosphate site. Residue Met196 coordinates substrate. Phosphate is bound at residue Thr197. 220–222 (DYD) provides a ligand contact to substrate.

This sequence belongs to the PNP/MTAP phosphorylase family. MTAP subfamily. Homotrimer.

It is found in the cytoplasm. The protein resides in the nucleus. It carries out the reaction S-methyl-5'-thioadenosine + phosphate = 5-(methylsulfanyl)-alpha-D-ribose 1-phosphate + adenine. The protein operates within amino-acid biosynthesis; L-methionine biosynthesis via salvage pathway; S-methyl-5-thio-alpha-D-ribose 1-phosphate from S-methyl-5'-thioadenosine (phosphorylase route): step 1/1. Functionally, catalyzes the reversible phosphorylation of S-methyl-5'-thioadenosine (MTA) to adenine and 5-methylthioribose-1-phosphate. Involved in the breakdown of MTA, a major by-product of polyamine biosynthesis. Responsible for the first step in the methionine salvage pathway after MTA has been generated from S-adenosylmethionine. Has broad substrate specificity with 6-aminopurine nucleosides as preferred substrates. In Bos taurus (Bovine), this protein is S-methyl-5'-thioadenosine phosphorylase.